The primary structure comprises 437 residues: MLYILKCKSNYIINFHRLPQKTSKALYTNISLSFIYRFMWGIMMKKLLIILIGFILLSSISAIQIDAPQYQPNVIHPGDDVDLWIKINNDNYDNEVKNIVVEVTPHYPFELRQVNPIKGKATISHLNPGESDTVYFKLHVDENAPSRDYRIDVKVSYDEVDKEDGKETSHHYEITKIYYLHVYGIASFEINIDDTSIIPGKTKTIKLDIKNVGTGNAKYLNLYLIGNDKINILGGSLIFVGCLKANNQYIIPIKIYAVPEIEDGIYSINANLFWVGEDGKQYNSTIPLNIRVVKKIYANQPYIYLDDVKNKGDYIEITIGIANRGTTKIKHCVMTLTANGRNYTKYIGDLDEDDYDTSIFEIKEFGDIPIKVTVTYFDDYHNPYNATETFNIHVEKVKKEESLSPMYIIGGVIVVIIIILYIRKRKRHQEFEEFEEI.

A helical transmembrane segment spans residues 47 to 67; that stretch reads LLIILIGFILLSSISAIQIDA.

Its subcellular location is the membrane. This is an uncharacterized protein from Methanocaldococcus jannaschii (strain ATCC 43067 / DSM 2661 / JAL-1 / JCM 10045 / NBRC 100440) (Methanococcus jannaschii).